A 335-amino-acid polypeptide reads, in one-letter code: N-acetylmuramoyl-L-alanine amidase sle1 (335 aa).

Residues 1–25 (MQKKVIAAIIGTSAISAVAATQANA) form the signal peptide. One can recognise a LysM 1 domain in the interval 27–70 (TTHTVKPGESVWAISNKYGISIAKLKSLNNLTSNLIFPNQVLKV). The span at 71 to 86 (SGSSNSTSNSSRPSTN) shows a compositional bias: low complexity. Residues 71–90 (SGSSNSTSNSSRPSTNSGGG) form a disordered region. LysM domains follow at residues 91–134 (SYYT…KLKV) and 158–201 (SYYT…KLKV). The 125-residue stretch at 211 to 335 (ASATTTNRGY…YQVNNYRYIH (125 aa)) folds into the Peptidase C51 domain.

Its subcellular location is the secreted. The protein localises to the cell surface. It catalyses the reaction Hydrolyzes the link between N-acetylmuramoyl residues and L-amino acid residues in certain cell-wall glycopeptides.. Its function is as follows. Peptidoglycan hydrolase involved in the splitting of the septum during cell division. The protein is N-acetylmuramoyl-L-alanine amidase sle1 (sle1) of Staphylococcus aureus (strain bovine RF122 / ET3-1).